Reading from the N-terminus, the 1074-residue chain is Transmembrane protein 132E (1074 aa).

An N-terminal signal peptide occupies residues M1–A23. At R26–A894 the chain is on the extracellular side. Residues N70 and N91 are each glycosylated (N-linked (GlcNAc...) asparagine). Disordered stretches follow at residues P205–A224 and G243–T266. Over residues S247–A262 the composition is skewed to low complexity. N-linked (GlcNAc...) asparagine glycans are attached at residues N320 and N401. Disordered stretches follow at residues R564 to G587 and G816 to P867. The span at G843–G854 shows a compositional bias: low complexity. A helical membrane pass occupies residues L895–L915. Topologically, residues R916–A1074 are cytoplasmic. Residues V962–H1064 are disordered. 2 stretches are compositionally biased toward low complexity: residues S973–H985 and F1016–E1026. Positions G1035–L1044 are enriched in acidic residues.

This sequence belongs to the TMEM132 family. As to expression, widely expressed, with highest levels in the cochlea. In the cochlea, detected in spiral ganglion, the organ of Corti and stria vascularis. In the organ of Corti, prominently expressed in the outer and inner hair cells, especially at the apical and basal region of the outer hair cell body (at protein level).

Its subcellular location is the membrane. Its function is as follows. Required for normal inner ear hair cell function and hearing. The chain is Transmembrane protein 132E (Tmem132e) from Mus musculus (Mouse).